The following is a 407-amino-acid chain: tRNA (guanine(9)-N1)-methyltransferase (407 aa).

Residues 1-19 show a composition bias toward basic and acidic residues; it reads MDLDPAHKPSQAEETKEQG. Disordered regions lie at residues 1-105 and 220-256; these read MDLD…VRKR and ENMI…PRPE. The segment covering 20-32 has biased composition (low complexity); it reads NEQGQVEQNQAQQ. The segment covering 91–103 has biased composition (basic residues); that stretch reads LKRKDSRIARKVR. The 237-residue stretch at 120 to 356 folds into the SAM-dependent MTase TRM10-type domain; the sequence is ANKQKPPSVN…SVIPKRKGGK (237 aa). S-adenosyl-L-methionine contacts are provided by residues 263 to 264, glycine 283, 287 to 291, cysteine 295, leucine 309, and 321 to 323; these read LS, DKNRE, and TVL. Aspartate 287 (proton acceptor) is an active-site residue. The tract at residues 353–407 is disordered; sequence KGGKLKEQQGASGETQETEEAEAEDPEEENEETKDPDAEASASKQNTPKVEVTSK. The segment covering 368-386 has biased composition (acidic residues); the sequence is QETEEAEAEDPEEENEETK. Positions 394–407 are enriched in polar residues; it reads ASKQNTPKVEVTSK.

The protein belongs to the class IV-like SAM-binding methyltransferase superfamily. TRM10 family. As to quaternary structure, monomer.

Its subcellular location is the cytoplasm. The protein resides in the nucleus. The catalysed reaction is guanosine(9) in tRNA + S-adenosyl-L-methionine = N(1)-methylguanosine(9) in tRNA + S-adenosyl-L-homocysteine + H(+). In terms of biological role, S-adenosyl-L-methionine-dependent guanine N(1)-methyltransferase that catalyzes the formation of N(1)-methylguanine at position 9 (m1G9) in cytoplasmic tRNA. The sequence is that of tRNA (guanine(9)-N1)-methyltransferase from Gibberella zeae (strain ATCC MYA-4620 / CBS 123657 / FGSC 9075 / NRRL 31084 / PH-1) (Wheat head blight fungus).